Consider the following 199-residue polypeptide: Glycerol-3-phosphate acyltransferase (199 aa).

The next 5 membrane-spanning stretches (helical) occupy residues 4 to 24 (LVSV…FLMG), 51 to 71 (WAAL…AYLG), 77 to 97 (EWGF…PVWL), 111 to 131 (VMLL…ALAV), and 152 to 172 (LFLL…AVVI).

It belongs to the PlsY family. Probably interacts with PlsX.

The protein localises to the cell membrane. The enzyme catalyses an acyl phosphate + sn-glycerol 3-phosphate = a 1-acyl-sn-glycero-3-phosphate + phosphate. The protein operates within lipid metabolism; phospholipid metabolism. Catalyzes the transfer of an acyl group from acyl-phosphate (acyl-PO(4)) to glycerol-3-phosphate (G3P) to form lysophosphatidic acid (LPA). This enzyme utilizes acyl-phosphate as fatty acyl donor, but not acyl-CoA or acyl-ACP. The protein is Glycerol-3-phosphate acyltransferase of Symbiobacterium thermophilum (strain DSM 24528 / JCM 14929 / IAM 14863 / T).